A 281-amino-acid polypeptide reads, in one-letter code: NADPH-dependent 7-cyano-7-deazaguanine reductase (281 aa).

Position 87–89 (87–89 (IES)) interacts with substrate. 89-90 (SK) is a binding site for NADPH. Cys-188 functions as the Thioimide intermediate in the catalytic mechanism. Asp-195 functions as the Proton donor in the catalytic mechanism. Position 227 to 228 (227 to 228 (HE)) interacts with substrate. 256–257 (RG) contacts NADPH. Positions 261-281 (INPYRSTEQDKPAHNNRMARQ) are disordered.

Belongs to the GTP cyclohydrolase I family. QueF type 2 subfamily. Homodimer.

The protein resides in the cytoplasm. The catalysed reaction is 7-aminomethyl-7-carbaguanine + 2 NADP(+) = 7-cyano-7-deazaguanine + 2 NADPH + 3 H(+). It participates in tRNA modification; tRNA-queuosine biosynthesis. In terms of biological role, catalyzes the NADPH-dependent reduction of 7-cyano-7-deazaguanine (preQ0) to 7-aminomethyl-7-deazaguanine (preQ1). The sequence is that of NADPH-dependent 7-cyano-7-deazaguanine reductase from Vibrio campbellii (strain ATCC BAA-1116).